A 98-amino-acid polypeptide reads, in one-letter code: Integration host factor subunit alpha (98 aa).

A disordered region spans residues 52 to 73; the sequence is FDLREKNQRPGRNPKTGEDIPI.

It belongs to the bacterial histone-like protein family. As to quaternary structure, heterodimer of an alpha and a beta chain.

In terms of biological role, this protein is one of the two subunits of integration host factor, a specific DNA-binding protein that functions in genetic recombination as well as in transcriptional and translational control. The polypeptide is Integration host factor subunit alpha (Aeromonas hydrophila subsp. hydrophila (strain ATCC 7966 / DSM 30187 / BCRC 13018 / CCUG 14551 / JCM 1027 / KCTC 2358 / NCIMB 9240 / NCTC 8049)).